The sequence spans 421 residues: 3-isopropylmalate dehydratase large subunit (421 aa).

Residues cysteine 300, cysteine 360, and cysteine 363 each coordinate [4Fe-4S] cluster.

This sequence belongs to the aconitase/IPM isomerase family. LeuC type 2 subfamily. As to quaternary structure, heterodimer of LeuC and LeuD. [4Fe-4S] cluster serves as cofactor.

The enzyme catalyses (2R,3S)-3-isopropylmalate = (2S)-2-isopropylmalate. The protein operates within amino-acid biosynthesis; L-leucine biosynthesis; L-leucine from 3-methyl-2-oxobutanoate: step 2/4. Functionally, catalyzes the isomerization between 2-isopropylmalate and 3-isopropylmalate, via the formation of 2-isopropylmaleate. The chain is 3-isopropylmalate dehydratase large subunit from Thermodesulfovibrio yellowstonii (strain ATCC 51303 / DSM 11347 / YP87).